The primary structure comprises 380 residues: MKVFKQQLEQLGAQNQYRSIPDLIHQGRYITRENCKMLNMSSNDYLGLASDENLRRSFLQQYGGNFPSFTSSSSRLLTGNFPIYTDLEELVAQRFQRESALLFNSGYHANLGILPALTTTKSLILADKFVHASMIDGIRLSRCAFFRYRHNDYEHLKNLLEKNVGKFDRTFIVTESVFSMDGDVADLKQLVQLKKQFPNTYLYVDEAHAIGVYGQNGLGIAERDNLIAEIDLLVGTFGKALASVGAYAVCNQVLKECLINQMRPLIFSTALPPFNVAWTYFIFERLPQFSKERSHLEQLSAFLRREVAHRTQIMPSQTCIVPYILGGNEATLAKAEYLQRQGYYCLPIRPPTVPKGTSRIRLSLTADMTMDEVRQFAACL.

Arginine 18 contacts substrate. 106 to 107 (GY) serves as a coordination point for pyridoxal 5'-phosphate. Residue histidine 131 coordinates substrate. Pyridoxal 5'-phosphate-binding positions include serine 179, 205–208 (DEAH), and 236–239 (TFGK). Lysine 239 bears the N6-(pyridoxal phosphate)lysine mark. Threonine 352 is a substrate binding site.

Belongs to the class-II pyridoxal-phosphate-dependent aminotransferase family. BioF subfamily. In terms of assembly, homodimer. It depends on pyridoxal 5'-phosphate as a cofactor.

The enzyme catalyses 6-carboxyhexanoyl-[ACP] + L-alanine + H(+) = (8S)-8-amino-7-oxononanoate + holo-[ACP] + CO2. It participates in cofactor biosynthesis; biotin biosynthesis. In terms of biological role, catalyzes the decarboxylative condensation of pimeloyl-[acyl-carrier protein] and L-alanine to produce 8-amino-7-oxononanoate (AON), [acyl-carrier protein], and carbon dioxide. This chain is Putative 8-amino-7-oxononanoate synthase (bioF), found in Neisseria meningitidis serogroup C (strain 053442).